Here is a 360-residue protein sequence, read N- to C-terminus: Serine/threonine-protein kinase SAPK4 (360 aa).

Residues 4–260 enclose the Protein kinase domain; the sequence is YEAVRDIGSG…MKEIKSHPWF (257 aa). Residues 10–18 and Lys33 each bind ATP; that span reads IGSGNFGVA. The Proton acceptor role is filled by Asp123. The interval 303-360 is disordered; sequence TMPKSSRTGYWSDAGSDEEEKEEEERPEENEEEEEDEYDKRVKEVHASGELRMSSLRI. A compositionally biased stretch (acidic residues) spans 317-339; it reads GSDEEEKEEEERPEENEEEEEDE. Residues 340-351 show a composition bias toward basic and acidic residues; sequence YDKRVKEVHASG.

It belongs to the protein kinase superfamily. Ser/Thr protein kinase family. In terms of processing, may be phosphorylated. In terms of tissue distribution, expressed in leaf blades, leaf sheaths and roots. Expressed in shoots and roots of young seedlings.

The enzyme catalyses L-seryl-[protein] + ATP = O-phospho-L-seryl-[protein] + ADP + H(+). It catalyses the reaction L-threonyl-[protein] + ATP = O-phospho-L-threonyl-[protein] + ADP + H(+). With respect to regulation, activated by hyperosmotic stress. In terms of biological role, may play a role in signal transduction of hyperosmotic response. The protein is Serine/threonine-protein kinase SAPK4 (SAPK4) of Oryza sativa subsp. japonica (Rice).